The chain runs to 650 residues: Epithelial sodium channel subunit beta (650 aa).

The Cytoplasmic portion of the chain corresponds to 1–95 (MLLHINPAYL…IICEGPKKKA (95 aa)). The helical transmembrane segment at 96 to 116 (MWFLLTLLFTALVCWQWGIFI) threads the bilayer. Residues 117–542 (RTYLSWEVSV…GGQFGFWMGG (426 aa)) are Extracellular-facing. Cystine bridges form between cysteine 143-cysteine 317, cysteine 229-cysteine 234, cysteine 241-cysteine 248, cysteine 294-cysteine 301, and cysteine 406-cysteine 458. Asparagine 244 is a glycosylation site (N-linked (GlcNAc...) asparagine). Asparagine 305 carries N-linked (GlcNAc...) asparagine glycosylation. The helical transmembrane segment at 543–563 (SVLCLIEFGEIIIDFVWITII) threads the bilayer. Over 564-650 (KLVALAKSLR…IESDSEGDAI (87 aa)) the chain is Cytoplasmic. A disordered region spans residues 600–650 (FQPDTAPRSPNTGPYPNEQALPIPGTPPPNYDSLRLQPLDVIESDSEGDAI). The PY motif; recruits WW domain-containing proteins and is thereby required for ubiquitination and inhibition of the channel by NEDD4 and NEDD4L signature appears at 626–630 (PPPNY). Over residues 641–650 (IESDSEGDAI) the composition is skewed to acidic residues. A phosphoserine mark is found at serine 643 and serine 645.

Belongs to the amiloride-sensitive sodium channel (TC 1.A.6) family. SCNN1B subfamily. In terms of assembly, component of the heterotrimeric epithelial sodium channel (ENaC) composed of an alpha/SCNN1A, a beta/SCNN1B and a gamma/SCNN1G subunit. An additional delta/SCNN1D subunit can replace the alpha/SCNN1A subunit to form an alternative channel with specific properties. Interacts with WWP1 (via WW domains). Interacts with WWP2 (via WW domains); inhibits the channel. Interacts with the full-length immature form of PCSK9 (pro-PCSK9). Interacts (N-glycosylated) with BPIFA1; the interaction is direct and inhibits the proteolytic processing of SCNN1A and SCNN1G and the activation of ENaC. Ubiquitinated. Can be ubiquitinated at multiple sites and undergo monoubiquitination and polyubiquitination. Ubiquitination by NEDD4 or NEDD4L inhibits the ENaC channel through endocytosis, intracellular retention and degradation of its individual subunits. However, some studies could not confirm the ubiquitination of this subunit of the ENaC. Post-translationally, phosphorylated on serine and threonine residues. Aldosterone and insulin increase the basal level of phosphorylation. In terms of processing, N-glycosylated. N-glycosylation is required for interaction with BPIFA1.

It localises to the apical cell membrane. The protein localises to the cytoplasmic vesicle membrane. It catalyses the reaction Na(+)(in) = Na(+)(out). Originally identified and characterized by its inhibition by the diuretic drug amiloride. This is one of the three pore-forming subunits of the heterotrimeric epithelial sodium channel (ENaC), a critical regulator of sodium balance and fluid homeostasis. ENaC operates in epithelial tissues, where it mediates the electrodiffusion of sodium ions from extracellular fluid through the apical membrane of cells, with water following osmotically. It plays a key role in maintaining sodium homeostasis through electrogenic sodium reabsorption in the kidneys. Additionally, ENaC is essential for airway surface liquid homeostasis, which is crucial for proper mucus clearance. The chain is Epithelial sodium channel subunit beta from Pan troglodytes (Chimpanzee).